Here is a 137-residue protein sequence, read N- to C-terminus: MATNRRVERVASLIKREVSQMLMSGIKDDRVGAGMVSVTDVVVSGDLQHTKIFVSIYGTPEAKAETMEGLKSAASYVRSELGQRVRLRRTPEVIFVEDKGLERGTQVISLLEQLTREREAREAAQAAAGVVDSTEDA.

Belongs to the RbfA family. As to quaternary structure, monomer. Binds 30S ribosomal subunits, but not 50S ribosomal subunits or 70S ribosomes.

It localises to the cytoplasm. Its function is as follows. One of several proteins that assist in the late maturation steps of the functional core of the 30S ribosomal subunit. Associates with free 30S ribosomal subunits (but not with 30S subunits that are part of 70S ribosomes or polysomes). Required for efficient processing of 16S rRNA. May interact with the 5'-terminal helix region of 16S rRNA. The polypeptide is Ribosome-binding factor A (Synechococcus sp. (strain ATCC 27144 / PCC 6301 / SAUG 1402/1) (Anacystis nidulans)).